Here is a 259-residue protein sequence, read N- to C-terminus: Peroxisomal membrane protein 11B (259 aa).

K43 is subject to N6-acetyllysine. The interval L157–P176 is disordered. Residues G159–P176 show a composition bias toward gly residues. Residues V211–P259 are interaction with PEX19, PEX11G and FIS1 and peroxisome targeting. Residues G233–L255 form a helical membrane-spanning segment.

This sequence belongs to the peroxin-11 family. Homodimer. Heterodimer with PEX11G. Interacts with PEX19. Interacts with FIS1.

Its subcellular location is the peroxisome membrane. Its function is as follows. Involved in peroxisomal proliferation. May regulate peroxisome division by recruiting the dynamin-related GTPase DNM1L to the peroxisomal membrane. Promotes membrane protrusion and elongation on the peroxisomal surface. This chain is Peroxisomal membrane protein 11B (PEX11B), found in Homo sapiens (Human).